Reading from the N-terminus, the 375-residue chain is Carbamoyl phosphate synthase small chain (375 aa).

The CPSase stretch occupies residues 1–186 (MKAILALEDG…IVDGTYAWPG (186 aa)). 3 residues coordinate L-glutamine: serine 45, glycine 238, and glycine 240. The Glutamine amidotransferase type-1 domain occupies 190–375 (RLVVFDMGIK…RNLVRKETGK (186 aa)). Cysteine 265 functions as the Nucleophile in the catalytic mechanism. 5 residues coordinate L-glutamine: leucine 266, glutamine 269, asparagine 307, glycine 309, and phenylalanine 310. Active-site residues include histidine 348 and glutamate 350.

Belongs to the CarA family. Composed of two chains; the small (or glutamine) chain promotes the hydrolysis of glutamine to ammonia, which is used by the large (or ammonia) chain to synthesize carbamoyl phosphate. Tetramer of heterodimers (alpha,beta)4.

It catalyses the reaction hydrogencarbonate + L-glutamine + 2 ATP + H2O = carbamoyl phosphate + L-glutamate + 2 ADP + phosphate + 2 H(+). The enzyme catalyses L-glutamine + H2O = L-glutamate + NH4(+). It participates in amino-acid biosynthesis; L-arginine biosynthesis; carbamoyl phosphate from bicarbonate: step 1/1. The protein operates within pyrimidine metabolism; UMP biosynthesis via de novo pathway; (S)-dihydroorotate from bicarbonate: step 1/3. Small subunit of the glutamine-dependent carbamoyl phosphate synthetase (CPSase). CPSase catalyzes the formation of carbamoyl phosphate from the ammonia moiety of glutamine, carbonate, and phosphate donated by ATP, constituting the first step of 2 biosynthetic pathways, one leading to arginine and/or urea and the other to pyrimidine nucleotides. The small subunit (glutamine amidotransferase) binds and cleaves glutamine to supply the large subunit with the substrate ammonia. The sequence is that of Carbamoyl phosphate synthase small chain from Solidesulfovibrio magneticus (strain ATCC 700980 / DSM 13731 / RS-1) (Desulfovibrio magneticus).